The following is a 94-amino-acid chain: Integration host factor subunit beta (94 aa).

Belongs to the bacterial histone-like protein family. In terms of assembly, heterodimer of an alpha and a beta chain.

Functionally, this protein is one of the two subunits of integration host factor, a specific DNA-binding protein that functions in genetic recombination as well as in transcriptional and translational control. The chain is Integration host factor subunit beta from Roseobacter denitrificans (strain ATCC 33942 / OCh 114) (Erythrobacter sp. (strain OCh 114)).